A 387-amino-acid chain; its full sequence is Mitogen-activated protein kinase homolog MMK1 (387 aa).

The region spanning 55-340 is the Protein kinase domain; sequence KPPIMPIGKG…VEDALAHPYL (286 aa). ATP is bound by residues 61-69 and lysine 84; that span reads IGKGAYGIV. Catalysis depends on aspartate 181, which acts as the Proton acceptor. Position 213 is a phosphothreonine (threonine 213). A TXY motif is present at residues 213–215; the sequence is TEY. Phosphotyrosine is present on tyrosine 215.

It belongs to the protein kinase superfamily. CMGC Ser/Thr protein kinase family. MAP kinase subfamily. The cofactor is Mg(2+). Post-translationally, dually phosphorylated on Thr-213 and Tyr-215, which activates the enzyme. Autophosphorylated. Roots and stems.

It carries out the reaction L-seryl-[protein] + ATP = O-phospho-L-seryl-[protein] + ADP + H(+). The catalysed reaction is L-threonyl-[protein] + ATP = O-phospho-L-threonyl-[protein] + ADP + H(+). Activated by tyrosine and threonine phosphorylation. Its function is as follows. May play a role in the mitogenic induction of symbiotic root nodules on Alfalfa by Rhizobium signal molecules. The protein is Mitogen-activated protein kinase homolog MMK1 (MMK1) of Medicago sativa (Alfalfa).